The primary structure comprises 682 residues: DNA-directed RNA polymerase subunit beta' (682 aa).

Zn(2+) is bound by residues Cys-69, Cys-71, Cys-87, and Cys-90. Mg(2+)-binding residues include Asp-489, Asp-491, and Asp-493.

This sequence belongs to the RNA polymerase beta' chain family. RpoC1 subfamily. In terms of assembly, in plastids the minimal PEP RNA polymerase catalytic core is composed of four subunits: alpha, beta, beta', and beta''. When a (nuclear-encoded) sigma factor is associated with the core the holoenzyme is formed, which can initiate transcription. Mg(2+) serves as cofactor. It depends on Zn(2+) as a cofactor.

The protein localises to the plastid. It localises to the chloroplast. It catalyses the reaction RNA(n) + a ribonucleoside 5'-triphosphate = RNA(n+1) + diphosphate. In terms of biological role, DNA-dependent RNA polymerase catalyzes the transcription of DNA into RNA using the four ribonucleoside triphosphates as substrates. The protein is DNA-directed RNA polymerase subunit beta' of Vitis vinifera (Grape).